The following is a 348-amino-acid chain: Tetraacyldisaccharide 4'-kinase (348 aa).

65–72 (VAGGAGKT) contributes to the ATP binding site. The segment at 89–117 (PGIVSRGHGSREREARPVSADSTAQSVGD) is disordered.

It belongs to the LpxK family.

The enzyme catalyses a lipid A disaccharide + ATP = a lipid IVA + ADP + H(+). The protein operates within glycolipid biosynthesis; lipid IV(A) biosynthesis; lipid IV(A) from (3R)-3-hydroxytetradecanoyl-[acyl-carrier-protein] and UDP-N-acetyl-alpha-D-glucosamine: step 6/6. Functionally, transfers the gamma-phosphate of ATP to the 4'-position of a tetraacyldisaccharide 1-phosphate intermediate (termed DS-1-P) to form tetraacyldisaccharide 1,4'-bis-phosphate (lipid IVA). In Leptothrix cholodnii (strain ATCC 51168 / LMG 8142 / SP-6) (Leptothrix discophora (strain SP-6)), this protein is Tetraacyldisaccharide 4'-kinase.